The primary structure comprises 670 residues: Solute carrier organic anion transporter family member 1A1 (670 aa).

Residues 1–20 (MEETEKKIATQEGRLFSKMK) lie on the Cytoplasmic side of the membrane. A helical transmembrane segment spans residues 21–40 (VFLLSLTCACLTKSLSGVYM). Over 41–59 (NSMLTQIERQFDISTSVAG) the chain is Extracellular. A helical membrane pass occupies residues 60–80 (LINGSFEIGNLFFIVFVSYFG). Residues 81–86 (TKLHRP) are Cytoplasmic-facing. A helical transmembrane segment spans residues 87–111 (VVIGIGCVIMGLGCLLMSLPHFFMG). Over 112–155 (RYEYETTISPTGNLSSNSFLCMENRTQTLKPTQDPAECVKEMKS) the chain is Extracellular. Asn124 and Asn135 each carry an N-linked (GlcNAc...) asparagine glycan. A helical transmembrane segment spans residues 156 to 184 (LMWICVMVGNIIRGIGETPIVPLGISYIE). The Cytoplasmic segment spans residues 185–203 (DFAKSENSPLYIGILEMGK). Residues 204-224 (VAGPIFGLLLGSYCAQIYVDI) form a helical membrane-spanning segment. Residues 225–242 (GSVNTDDLTITPSDTRWV) are Extracellular-facing. The chain crosses the membrane as a helical span at residues 243-267 (GAWWIGFLVCAGVNILTSIPFFFLP). Topologically, residues 268–311 (KALPKKGQQENVAVTKDGKVEKYGGQAREENLGITKDFLTFMKR) are cytoplasmic. A helical membrane pass occupies residues 312 to 333 (LFCNPIYMLFILTSVLQVNGFI). Residues 334–353 (NKFTFLPKYLEQQYGKSTAE) lie on the Extracellular side of the membrane. Residues 354-377 (AIFLIGVYSLPPICLGYLIGGFIM) form a helical membrane-spanning segment. The Cytoplasmic segment spans residues 378-381 (KKFK). The helical transmembrane segment at 382–405 (ITVKKAAYLAFCLSVFEYLLFLCH) threads the bilayer. Over 406–513 (FMLTCDNAAV…PECANRLQYF (108 aa)) the chain is Extracellular. In terms of domain architecture, Kazal-like spans 433–488 (SKVLADCNTRCSCSTNTWDPVCGDNGVAYMSACLAGCKKFVGTGTNMVFQDCSCIQ). 3 disulfides stabilise this stretch: Cys439-Cys469, Cys445-Cys465, and Cys454-Cys486. Asn492 carries N-linked (GlcNAc...) asparagine glycosylation. The chain crosses the membrane as a helical span at residues 514–536 (LILTIIISFIYSLTAIPGYMVFL). Residues 537–545 (RCVKSEEKS) are Cytoplasmic-facing. A helical transmembrane segment spans residues 546–571 (LGVGLHTFCIRVFAGIPAPVYFGALI). The Extracellular portion of the chain corresponds to 572–605 (DRTCLHWGTLKCGQRGACRMYDINSFRHIYLGLP). The helical transmembrane segment at 606–623 (IALRGSSYLPAFFILILM) threads the bilayer. Topologically, residues 624-670 (RKFQFPGDIDSSATDHTEMMLGEKESEHTDVHGSPQVENDGELKTKL) are cytoplasmic. Residues Ser634 and Ser635 each carry the phosphoserine modification. The span at 645 to 654 (GEKESEHTDV) shows a compositional bias: basic and acidic residues. The disordered stretch occupies residues 645 to 670 (GEKESEHTDVHGSPQVENDGELKTKL).

This sequence belongs to the organo anion transporter (TC 2.A.60) family. Binds to PDZK1. Interaction with PDZK1 is required for expression on hepatocyte surface. In terms of processing, glycosylated. In terms of tissue distribution, highly expressed in liver and kidney, and at lower levels in brain, lung, skeletal muscle and proximal colon.

Its subcellular location is the basolateral cell membrane. The catalysed reaction is estrone 3-sulfate(out) + hydrogencarbonate(in) = estrone 3-sulfate(in) + hydrogencarbonate(out). It catalyses the reaction taurocholate(out) + hydrogencarbonate(in) = taurocholate(in) + hydrogencarbonate(out). It carries out the reaction L-thyroxine(out) = L-thyroxine(in). The enzyme catalyses prostaglandin E2(out) = prostaglandin E2(in). The catalysed reaction is 17beta-estradiol 17-O-(beta-D-glucuronate)(out) = 17beta-estradiol 17-O-(beta-D-glucuronate)(in). It catalyses the reaction dehydroepiandrosterone 3-sulfate(out) = dehydroepiandrosterone 3-sulfate(in). Functionally, mediates the Na(+)-independent transport of organic anions such as steroid sulfate conjugates (dehydroepiandrosterone sulfate (DHEAS), 17-beta-glucuronosyl estradiol, estrone-3-sulfate), conjugated (taurocholate) and unconjugated (cholate) bile acids, prostaglandin E2 (PGE2) and L-thyroxine T4. Also capable of transporting sulfobromophthalein (BSP), ouabain and gadoxetate. Hydrogencarbonate/HCO3(-) acts as the probable counteranion that exchanges for organic anions. Shows a pH-sensitive substrate specificity which may be ascribed to the protonation state of the binding site and leads to a stimulation of substrate transport in an acidic microenvironment. In Rattus norvegicus (Rat), this protein is Solute carrier organic anion transporter family member 1A1.